Here is a 293-residue protein sequence, read N- to C-terminus: MTTFFQQHFSRNKWLAYAQLMRFDKPIGTLLLLHPTLWALFAAAGGMPPLSVLVIFVLGVIVMRAAGCVINDYADRHIDGEVKRTSQRPLATGRVTTTEAKILFVLLLCIAFVLDLLLNRYTFLLSFVAVALAIIYPFMKRFTHLPQVVLGMAFGWAIPMAYGAVSESLPLECWLLFFANIFWTVAYDTQYAMVDRDDDLRIGVKSTAILFAQYDNKIIALLQFITLVLLVIFGWISQYHWGYFVVLGLSASLFSHQCWLTKQRVREQCFKAFLNNHYFGLGVFFAILVGIYA.

Transmembrane regions (helical) follow at residues 41–61, 98–118, 122–142, 145–165, 167–187, 218–238, 241–261, and 272–292; these read FAAA…LGVI, TEAK…DLLL, TFLL…MKRF, LPQV…YGAV, ESLP…TVAY, IIAL…WISQ, WGYF…CWLT, and AFLN…VGIY.

The protein belongs to the UbiA prenyltransferase family. Mg(2+) is required as a cofactor.

The protein localises to the cell inner membrane. The enzyme catalyses all-trans-octaprenyl diphosphate + 4-hydroxybenzoate = 4-hydroxy-3-(all-trans-octaprenyl)benzoate + diphosphate. It functions in the pathway cofactor biosynthesis; ubiquinone biosynthesis. Its function is as follows. Catalyzes the prenylation of para-hydroxybenzoate (PHB) with an all-trans polyprenyl group. Mediates the second step in the final reaction sequence of ubiquinone-8 (UQ-8) biosynthesis, which is the condensation of the polyisoprenoid side chain with PHB, generating the first membrane-bound Q intermediate 3-octaprenyl-4-hydroxybenzoate. The protein is 4-hydroxybenzoate octaprenyltransferase of Actinobacillus pleuropneumoniae serotype 5b (strain L20).